The sequence spans 738 residues: 1,4-alpha-glucan branching enzyme GlgB (738 aa).

Aspartate 417 serves as the catalytic Nucleophile. Catalysis depends on glutamate 472, which acts as the Proton donor.

The protein belongs to the glycosyl hydrolase 13 family. GlgB subfamily. In terms of assembly, monomer.

The enzyme catalyses Transfers a segment of a (1-&gt;4)-alpha-D-glucan chain to a primary hydroxy group in a similar glucan chain.. Its pathway is glycan biosynthesis; glycogen biosynthesis. Its function is as follows. Catalyzes the formation of the alpha-1,6-glucosidic linkages in glycogen by scission of a 1,4-alpha-linked oligosaccharide from growing alpha-1,4-glucan chains and the subsequent attachment of the oligosaccharide to the alpha-1,6 position. In Burkholderia pseudomallei (strain K96243), this protein is 1,4-alpha-glucan branching enzyme GlgB.